A 254-amino-acid polypeptide reads, in one-letter code: Phosphoglycerate mutase 1 (254 aa).

Substrate-binding positions include 10–17 and 23–24; these read RHGESAWN and SG. The active-site Tele-phosphohistidine intermediate is H11. Phosphoserine occurs at positions 14 and 23. Y26 is subject to Phosphotyrosine. S31 carries the post-translational modification Phosphoserine. Substrate-binding positions include R62, 89–92, and K100; that span reads ERHY. E89 functions as the Proton donor/acceptor in the catalytic mechanism. Residue K106 is modified to N6-acetyllysine. 116–117 provides a ligand contact to substrate; sequence RR. S118 bears the Phosphoserine mark. Residue 187–188 coordinates substrate; it reads GN. K251 bears the N6-acetyllysine; alternate mark. K251 is modified (N6-succinyllysine; alternate). N6-acetyllysine is present on residues K253 and K254.

The protein belongs to the phosphoglycerate mutase family. BPG-dependent PGAM subfamily. As to quaternary structure, homodimer. In terms of processing, acetylated at Lys-253, Lys-253 and Lys-254 under high glucose condition. Acetylation increases catalytic activity. Under glucose restriction SIRT1 levels dramatically increase and it deacetylates the enzyme.

The enzyme catalyses (2R)-2-phosphoglycerate = (2R)-3-phosphoglycerate. The catalysed reaction is (2R)-3-phospho-glyceroyl phosphate = (2R)-2,3-bisphosphoglycerate + H(+). In terms of biological role, catalyzes the interconversion of 2-phosphoglycerate and 3-phosphoglyceratea crucial step in glycolysis, by using 2,3-bisphosphoglycerate. Also catalyzes the interconversion of (2R)-2,3-bisphosphoglycerate and (2R)-3-phospho-glyceroyl phosphate. This chain is Phosphoglycerate mutase 1, found in Pongo abelii (Sumatran orangutan).